Consider the following 131-residue polypeptide: Small ribosomal subunit protein bS6 (131 aa).

The segment at 96 to 131 (VTAPSPMMKEEKSKSLLAKDEAAAPAPAPATEQATA) is disordered. Basic and acidic residues predominate over residues 103-117 (MKEEKSKSLLAKDEA). The segment covering 118 to 131 (AAPAPAPATEQATA) has biased composition (low complexity).

This sequence belongs to the bacterial ribosomal protein bS6 family.

Its function is as follows. Binds together with bS18 to 16S ribosomal RNA. This is Small ribosomal subunit protein bS6 from Methylobacillus flagellatus (strain ATCC 51484 / DSM 6875 / VKM B-1610 / KT).